Here is a 258-residue protein sequence, read N- to C-terminus: L-2,3-butanediol dehydrogenase (258 aa).

Residues 12-14, Asp33, Gln37, 61-62, Asn88, Tyr154, Lys158, and 184-189 contribute to the NAD(+) site; these read QGI, DV, and PGIVGT. Tyr154 acts as the Proton acceptor in catalysis.

Belongs to the short-chain dehydrogenases/reductases (SDR) family. As to quaternary structure, homotetramer.

The enzyme catalyses (S,S)-butane-2,3-diol + NAD(+) = (S)-acetoin + NADH + H(+). It carries out the reaction (S)-acetoin + NAD(+) = diacetyl + NADH + H(+). Slightly activated by Ba(2+), Ca(2+), Mn(2+), Mg(2+), and Co(2+), while Hg(2+) and Cu(2+) cause marked inhibition of the activity. Ni(2+), Zn(2+) and Cd(2+) have no effect on the catalytic activity. Is also slightly inhibited by lactate, pyruvate, succinate, acetate and formate. In terms of biological role, catalyzes the reversible reduction of (S)-acetoin to (S,S)-butane-2,3-diol (L-BD) in the presence of NADH. To a lesser extent, can also catalyze the irreversible reduction of diacetyl to (S)-acetoin. Cannot oxidize meso-BD, D-BD, 2-butanol, 1,2-propanediol, ethanol, acetol, 1,2-butanediol, 1,3-butanediol, n-butanol, and n-propanol. Cannot reduce (R)-acetoin, acetol, dihydroxyacetone and 2,4-pentanedione. The protein is L-2,3-butanediol dehydrogenase of Corynebacterium glutamicum (Brevibacterium saccharolyticum).